The primary structure comprises 853 residues: Rod cGMP-specific 3',5'-cyclic phosphodiesterase subunit beta (853 aa).

S2 is subject to N-acetylserine. GAF domains lie at 71-220 (NMER…TLNL) and 252-429 (DIER…GWSV). One can recognise a PDEase domain in the interval 481 to 814 (EEDELGKILK…KEWKALADEY (334 aa)). H557 functions as the Proton donor in the catalytic mechanism. 4 residues coordinate a divalent metal cation: H561, H597, D598, and D718. Cysteine methyl ester is present on C850. C850 carries S-geranylgeranyl cysteine lipidation. Positions 851 to 853 (RIL) are cleaved as a propeptide — removed in mature form.

It belongs to the cyclic nucleotide phosphodiesterase family. As to quaternary structure, oligomer composed of two catalytic chains (alpha and beta), an inhibitory chain (gamma) and the delta chain. It depends on a divalent metal cation as a cofactor.

Its subcellular location is the membrane. The protein resides in the cell projection. It localises to the cilium. It is found in the photoreceptor outer segment. The enzyme catalyses 3',5'-cyclic GMP + H2O = GMP + H(+). Functionally, necessary for the formation of a functional phosphodiesterase holoenzyme. Involved in retinal circadian rhythm photoentrainment via modulation of UVA and orange light-induced phase-shift of the retina clock. May participate in processes of transmission and amplification of the visual signal. In terms of biological role, rod-specific cGMP phosphodiesterase that catalyzes the hydrolysis of 3',5'-cyclic GMP. Necessary for the formation of a functional phosphodiesterase holoenzyme. Involved in retinal circadian rhythm photoentrainment via modulation of UVA and orange light-induced phase-shift of the retina clock. May participate in processes of transmission and amplification of the visual signal. This chain is Rod cGMP-specific 3',5'-cyclic phosphodiesterase subunit beta (PDE6B), found in Bos taurus (Bovine).